Reading from the N-terminus, the 478-residue chain is Cytochrome c-552 (478 aa).

Residues 1–27 (MKKQWTRRSAAAIAMVTTLLLSSHSFA) form the signal peptide. Position 91 (H91) interacts with heme c. C119, C122, and K123 together coordinate heme. Heme c-binding residues include C157, C160, H161, C206, C209, and H210. Ca(2+)-binding residues include E212, Y213, K258, and Q260. Y213 lines the substrate pocket. H261 serves as a coordination point for substrate. Residues H272, C279, C282, H283, H298, C311, C314, H315, and H390 each coordinate heme c.

This sequence belongs to the cytochrome c-552 family. Ca(2+) is required as a cofactor. Requires heme c as cofactor.

Its subcellular location is the periplasm. The catalysed reaction is 6 Fe(III)-[cytochrome c] + NH4(+) + 2 H2O = 6 Fe(II)-[cytochrome c] + nitrite + 8 H(+). Its pathway is nitrogen metabolism; nitrate reduction (assimilation). Its function is as follows. Catalyzes the reduction of nitrite to ammonia, consuming six electrons in the process. The protein is Cytochrome c-552 of Aliivibrio fischeri (strain ATCC 700601 / ES114) (Vibrio fischeri).